Here is a 341-residue protein sequence, read N- to C-terminus: tRNA N6-adenosine threonylcarbamoyltransferase (341 aa).

Fe cation contacts are provided by H117 and H121. Substrate is bound by residues 139-143, D172, G185, D189, and N278; that span reads VVSGG. D307 serves as a coordination point for Fe cation.

Belongs to the KAE1 / TsaD family. Requires Fe(2+) as cofactor.

It localises to the cytoplasm. It carries out the reaction L-threonylcarbamoyladenylate + adenosine(37) in tRNA = N(6)-L-threonylcarbamoyladenosine(37) in tRNA + AMP + H(+). In terms of biological role, required for the formation of a threonylcarbamoyl group on adenosine at position 37 (t(6)A37) in tRNAs that read codons beginning with adenine. Is involved in the transfer of the threonylcarbamoyl moiety of threonylcarbamoyl-AMP (TC-AMP) to the N6 group of A37, together with TsaE and TsaB. TsaD likely plays a direct catalytic role in this reaction. The polypeptide is tRNA N6-adenosine threonylcarbamoyltransferase (Bacillus licheniformis (strain ATCC 14580 / DSM 13 / JCM 2505 / CCUG 7422 / NBRC 12200 / NCIMB 9375 / NCTC 10341 / NRRL NRS-1264 / Gibson 46)).